Reading from the N-terminus, the 575-residue chain is Intermediate filament protein ifd-1 (575 aa).

Positions 1–56 are head; that stretch reads MSKLNPRVAHNPVLSRIIESGRTNLPSGITSAGSLSAYAQAAAVTIRDNRDREKRE. The IF rod domain maps to 53–406; sequence EKREIADLNN…KLMEQAENLR (354 aa). A coil 1A region spans residues 57 to 88; that stretch reads IADLNNRLARYVEKVRFLEAQNRVLENDIGLF. The segment at 89-102 is linker 1; the sequence is RQAAHIHTGKVRDY. The interval 103-240 is coil 1B; the sequence is YDAEKTSLAT…STHEIAIREE (138 aa). Positions 241–258 are linker 12; that stretch reads INKARRDSTDKNREFFHR. Positions 259–408 are coil 2; it reads ELHMSMKEIR…MEQAENLRTS (150 aa). Residues 409 to 572 form a tail region; sequence YQSDFVIDTP…DEVGWYAHVS (164 aa). The region spanning 459–575 is the LTD domain; it reads NTQQFRSYGK…GWYAHVSYSH (117 aa).

It belongs to the intermediate filament family.

It is found in the cytoplasm. In terms of biological role, cytoplasmic intermediate filaments provide mechanical strength to cells. Not essential protein. This Caenorhabditis elegans protein is Intermediate filament protein ifd-1.